The primary structure comprises 184 residues: Ribulose bisphosphate carboxylase small subunit, chloroplastic 5 (184 aa).

The N-terminal 43 residues, 1 to 43, are a transit peptide targeting the chloroplast; it reads MAAAMMNKTIVVSKDGCARSSSIPKVATNKMGFASAVAMKKSR.

It belongs to the RuBisCO small chain family. Heterohexadecamer of 8 large and 8 small subunits.

It localises to the plastid. It is found in the chloroplast. Its function is as follows. RuBisCO catalyzes two reactions: the carboxylation of D-ribulose 1,5-bisphosphate, the primary event in carbon dioxide fixation, as well as the oxidative fragmentation of the pentose substrate. Both reactions occur simultaneously and in competition at the same active site. Although the small subunit is not catalytic it is essential for maximal activity. In Acetabularia peniculus (Green alga), this protein is Ribulose bisphosphate carboxylase small subunit, chloroplastic 5.